We begin with the raw amino-acid sequence, 480 residues long: Thiamine biosynthesis bifunctional protein ThiM/ThiE (480 aa).

Residues 1-287 are hydroxyethylthiazole kinase; it reads MSTLPERVRE…LYVLVSGATP (287 aa). 5-(2-hydroxyethyl)-4-methylthiazole is bound at residue Met-40. ATP is bound by residues Arg-116 and Thr-164. Gly-191 serves as a coordination point for 5-(2-hydroxyethyl)-4-methylthiazole. The tract at residues 288–480 is thiamine-phosphate synthase; sequence PDVLEAVLQA…VRRAKGEVSA (193 aa). 4-amino-2-methyl-5-(diphosphooxymethyl)pyrimidine is bound by residues 303–307 and Asn-335; that span reads QFREK. The Mg(2+) site is built by Asp-336 and Asp-355. Position 374 (Thr-374) interacts with 4-amino-2-methyl-5-(diphosphooxymethyl)pyrimidine. Residue 400–402 coordinates 2-[(2R,5Z)-2-carboxy-4-methylthiazol-5(2H)-ylidene]ethyl phosphate; the sequence is TPS. Lys-403 is a binding site for 4-amino-2-methyl-5-(diphosphooxymethyl)pyrimidine. Residues Gly-431 and 451–452 each bind 2-[(2R,5Z)-2-carboxy-4-methylthiazol-5(2H)-ylidene]ethyl phosphate; that span reads IS.

It in the N-terminal section; belongs to the Thz kinase family. This sequence in the C-terminal section; belongs to the thiamine-phosphate synthase family. Mg(2+) serves as cofactor.

The enzyme catalyses 5-(2-hydroxyethyl)-4-methylthiazole + ATP = 4-methyl-5-(2-phosphooxyethyl)-thiazole + ADP + H(+). It carries out the reaction 2-[(2R,5Z)-2-carboxy-4-methylthiazol-5(2H)-ylidene]ethyl phosphate + 4-amino-2-methyl-5-(diphosphooxymethyl)pyrimidine + 2 H(+) = thiamine phosphate + CO2 + diphosphate. The catalysed reaction is 2-(2-carboxy-4-methylthiazol-5-yl)ethyl phosphate + 4-amino-2-methyl-5-(diphosphooxymethyl)pyrimidine + 2 H(+) = thiamine phosphate + CO2 + diphosphate. It catalyses the reaction 4-methyl-5-(2-phosphooxyethyl)-thiazole + 4-amino-2-methyl-5-(diphosphooxymethyl)pyrimidine + H(+) = thiamine phosphate + diphosphate. It functions in the pathway cofactor biosynthesis; thiamine diphosphate biosynthesis; 4-methyl-5-(2-phosphoethyl)-thiazole from 5-(2-hydroxyethyl)-4-methylthiazole: step 1/1. Its pathway is cofactor biosynthesis; thiamine diphosphate biosynthesis; thiamine phosphate from 4-amino-2-methyl-5-diphosphomethylpyrimidine and 4-methyl-5-(2-phosphoethyl)-thiazole: step 1/1. In terms of biological role, condenses 4-methyl-5-(beta-hydroxyethyl)thiazole monophosphate (THZ-P) and 2-methyl-4-amino-5-hydroxymethyl pyrimidine pyrophosphate (HMP-PP) to form thiamine monophosphate (TMP). This Symbiobacterium thermophilum (strain DSM 24528 / JCM 14929 / IAM 14863 / T) protein is Thiamine biosynthesis bifunctional protein ThiM/ThiE (thiM/thiE).